A 174-amino-acid chain; its full sequence is NADH-ubiquinone oxidoreductase chain 6 (174 aa).

Helical transmembrane passes span 25–45 (SMGLMLLIQTFLTCLITGIYV), 48–68 (FWFSYVLFLIFLGGMLILFIY), 82–102 (FKLTMFSLVLFSLSMVIFFIL), and 143–163 (LITLLLINYLFLTLLVTVKIT).

Belongs to the complex I subunit 6 family.

It is found in the mitochondrion membrane. It catalyses the reaction a ubiquinone + NADH + 5 H(+)(in) = a ubiquinol + NAD(+) + 4 H(+)(out). Core subunit of the mitochondrial membrane respiratory chain NADH dehydrogenase (Complex I) that is believed to belong to the minimal assembly required for catalysis. Complex I functions in the transfer of electrons from NADH to the respiratory chain. The immediate electron acceptor for the enzyme is believed to be ubiquinone. The sequence is that of NADH-ubiquinone oxidoreductase chain 6 (mt:ND6) from Anopheles gambiae (African malaria mosquito).